The following is a 229-amino-acid chain: Cytidylate kinase (229 aa).

12–20 (GPSGSGKGT) is an ATP binding site.

The protein belongs to the cytidylate kinase family. Type 1 subfamily.

The protein localises to the cytoplasm. The enzyme catalyses CMP + ATP = CDP + ADP. It catalyses the reaction dCMP + ATP = dCDP + ADP. The chain is Cytidylate kinase from Pseudomonas syringae pv. syringae (strain B728a).